The chain runs to 282 residues: Inositol oxygenase (282 aa).

A disordered region spans residues 1 to 25 (MKDPDPSQVYRPDMDPEAAKDKGSF). The span at 12–24 (PDMDPEAAKDKGS) shows a compositional bias: basic and acidic residues. Arg-26 is a substrate binding site. Ser-30 bears the Phosphoserine mark. Residue 82 to 84 (DES) participates in substrate binding. Residues His-95, His-120, and Asp-121 each contribute to the Fe cation site. Residues Lys-124 and 138-139 (GD) contribute to the substrate site. Residues His-191, His-217, and Asp-250 each contribute to the Fe cation site. Position 217 to 218 (217 to 218 (HS)) interacts with substrate.

This sequence belongs to the myo-inositol oxygenase family. Fe cation serves as cofactor. Post-translationally, the N-terminus is blocked. In terms of tissue distribution, kidney specific.

It localises to the cytoplasm. The enzyme catalyses myo-inositol + O2 = D-glucuronate + H2O + H(+). The protein operates within polyol metabolism; myo-inositol degradation into D-glucuronate; D-glucuronate from myo-inositol: step 1/1. The protein is Inositol oxygenase (MIOX) of Sus scrofa (Pig).